A 296-amino-acid polypeptide reads, in one-letter code: Uricase (296 aa).

Active-site charge relay system residues include lysine 14 and threonine 61. Urate-binding residues include threonine 61, aspartate 62, phenylalanine 163, arginine 180, valine 229, glutamine 230, and asparagine 256. The Charge relay system role is filled by histidine 258.

The protein belongs to the uricase family.

Its subcellular location is the peroxisome. The protein localises to the cytoplasm. The protein resides in the nucleus. The catalysed reaction is urate + O2 + H2O = 5-hydroxyisourate + H2O2. Its pathway is purine metabolism; urate degradation; (S)-allantoin from urate: step 1/3. Its function is as follows. Catalyzes the oxidation of uric acid to 5-hydroxyisourate, which is further processed to form (S)-allantoin. The chain is Uricase from Schizosaccharomyces pombe (strain 972 / ATCC 24843) (Fission yeast).